The following is a 963-amino-acid chain: Protein bicaudal C homolog 1-A (963 aa).

Residues 1–48 form a disordered region; the sequence is MAAQCESIGGDMNQSDPGSNSERSADSPVPGSEDDSPHDPEWREERFR. Residues 12-22 are compositionally biased toward polar residues; sequence MNQSDPGSNSE. Over residues 35 to 48 the composition is skewed to basic and acidic residues; the sequence is DSPHDPEWREERFR. 2 KH domains span residues 128–195 and 280–344; these read RVTL…RVRI and PVST…RQYL. Residues 592 to 601 show a composition bias toward polar residues; it reads EASRQSNNHS. 3 disordered regions span residues 592–613, 668–713, and 767–834; these read EASRQSNNHSSAEEVNSKTDPE, ERLL…TSQS, and LRRA…NKSA. Composition is skewed to basic and acidic residues over residues 602-612 and 683-696; these read SAEEVNSKTDP and VTDKKAPGSERAAE. Residues 784-797 are compositionally biased toward low complexity; the sequence is ENSSLSRSNSREQL. The segment covering 812–824 has biased composition (polar residues); sequence IDSSQNDYSSSIG. An SAM domain is found at 862 to 925; the sequence is FKGSDLPELF…LLAISELNKN (64 aa).

Belongs to the BicC family.

Functionally, putative RNA-binding protein. May be involved in regulating gene expression during embryonic development. Seems to be involved in endoderm formation. Ectopic expression results in endoderm formation in the absence of mesoderm induction. The sequence is that of Protein bicaudal C homolog 1-A (bicc1-a) from Xenopus laevis (African clawed frog).